The primary structure comprises 605 residues: Elongation factor 4 (605 aa).

The tr-type G domain occupies 8 to 190 (RRVRNFCIVA…AIITRIPPPQ (183 aa)). GTP contacts are provided by residues 20–25 (DHGKST) and 137–140 (NKID).

It belongs to the TRAFAC class translation factor GTPase superfamily. Classic translation factor GTPase family. LepA subfamily.

It is found in the cell inner membrane. The enzyme catalyses GTP + H2O = GDP + phosphate + H(+). Required for accurate and efficient protein synthesis under certain stress conditions. May act as a fidelity factor of the translation reaction, by catalyzing a one-codon backward translocation of tRNAs on improperly translocated ribosomes. Back-translocation proceeds from a post-translocation (POST) complex to a pre-translocation (PRE) complex, thus giving elongation factor G a second chance to translocate the tRNAs correctly. Binds to ribosomes in a GTP-dependent manner. This Treponema pallidum (strain Nichols) protein is Elongation factor 4.